A 74-amino-acid polypeptide reads, in one-letter code: Homeobox protein H40 (74 aa).

Residues A8–N67 constitute a DNA-binding region (homeobox).

The protein localises to the nucleus. In Apis mellifera (Honeybee), this protein is Homeobox protein H40.